A 137-amino-acid chain; its full sequence is uncharacterized protein (137 aa).

Residues 4–21 (ISWQIVLAVIGVVAGFII) form a helical membrane-spanning segment.

The protein localises to the membrane. This is an uncharacterized protein from Archaeoglobus fulgidus (strain ATCC 49558 / DSM 4304 / JCM 9628 / NBRC 100126 / VC-16).